We begin with the raw amino-acid sequence, 343 residues long: Heat-inducible transcription repressor HrcA (343 aa).

Belongs to the HrcA family.

Its function is as follows. Negative regulator of class I heat shock genes (grpE-dnaK-dnaJ and groELS operons). Prevents heat-shock induction of these operons. The sequence is that of Heat-inducible transcription repressor HrcA from Bacillus velezensis (strain DSM 23117 / BGSC 10A6 / LMG 26770 / FZB42) (Bacillus amyloliquefaciens subsp. plantarum).